Reading from the N-terminus, the 440-residue chain is Putative purine permease YwdJ (440 aa).

The next 13 membrane-spanning stretches (helical) occupy residues 3 to 23 (LVLG…VVPV), 39 to 59 (LIQS…LKGH), 67 to 87 (PAGL…TVFA), 96 to 116 (LQGA…FKVI), 130 to 150 (VYLL…ILGI), 156 to 176 (GVDG…FIMT), 188 to 208 (ILLA…AKPI), 231 to 251 (GLII…LASM), 283 to 303 (LLSG…AGFI), 314 to 334 (FMLG…MNTF), 341 to 361 (VGFA…FAEF), 374 to 394 (SIIG…ETAL), and 399 to 419 (PVFI…AIAA).

Belongs to the nucleobase:cation symporter-2 (NCS2) (TC 2.A.40) family.

Its subcellular location is the cell membrane. This Bacillus subtilis (strain 168) protein is Putative purine permease YwdJ (ywdJ).